Reading from the N-terminus, the 84-residue chain is Small ribosomal subunit protein eS27 (84 aa).

Residues 1 to 16 are compositionally biased toward basic and acidic residues; it reads MPLAKDPLHPSPEEEK. The interval 1 to 25 is disordered; sequence MPLAKDPLHPSPEEEKRKHKKKRLV. At S11 the chain carries Phosphoserine. Residues 38–60 form a C4-type zinc finger; sequence PGCYKITTVFSHAQTVVLCVGCS.

Belongs to the eukaryotic ribosomal protein eS27 family. In terms of assembly, component of the small ribosomal subunit. Part of the small subunit (SSU) processome, composed of more than 70 proteins and the RNA chaperone small nucleolar RNA (snoRNA) U3. Requires Zn(2+) as cofactor.

It is found in the cytoplasm. Its subcellular location is the nucleus. The protein localises to the nucleolus. Functionally, component of the small ribosomal subunit. The ribosome is a large ribonucleoprotein complex responsible for the synthesis of proteins in the cell. Required for proper rRNA processing and maturation of 18S rRNAs. Part of the small subunit (SSU) processome, first precursor of the small eukaryotic ribosomal subunit. During the assembly of the SSU processome in the nucleolus, many ribosome biogenesis factors, an RNA chaperone and ribosomal proteins associate with the nascent pre-rRNA and work in concert to generate RNA folding, modifications, rearrangements and cleavage as well as targeted degradation of pre-ribosomal RNA by the RNA exosome. In Pongo abelii (Sumatran orangutan), this protein is Small ribosomal subunit protein eS27 (RPS27).